The following is a 436-amino-acid chain: Trigger factor (436 aa).

The 86-residue stretch at 161–246 (GMRVTMDFVG…LNKVEEQILP (86 aa)) folds into the PPIase FKBP-type domain.

Belongs to the FKBP-type PPIase family. Tig subfamily.

The protein resides in the cytoplasm. The catalysed reaction is [protein]-peptidylproline (omega=180) = [protein]-peptidylproline (omega=0). Functionally, involved in protein export. Acts as a chaperone by maintaining the newly synthesized protein in an open conformation. Functions as a peptidyl-prolyl cis-trans isomerase. The sequence is that of Trigger factor from Aeromonas hydrophila subsp. hydrophila (strain ATCC 7966 / DSM 30187 / BCRC 13018 / CCUG 14551 / JCM 1027 / KCTC 2358 / NCIMB 9240 / NCTC 8049).